The sequence spans 179 residues: NADH dehydrogenase [ubiquinone] 1 beta subcomplex subunit 9 (179 aa).

Position 2 is an N-acetylalanine (alanine 2). The residue at position 85 (serine 85) is a Phosphoserine. Residues 139-160 (QLQEETPVGGPRTEALPPARKQ) are disordered.

This sequence belongs to the complex I LYR family. Mammalian complex I is composed of 45 different subunits.

The protein resides in the mitochondrion inner membrane. Accessory subunit of the mitochondrial membrane respiratory chain NADH dehydrogenase (Complex I), that is believed to be not involved in catalysis. Complex I functions in the transfer of electrons from NADH to the respiratory chain. The immediate electron acceptor for the enzyme is believed to be ubiquinone. This is NADH dehydrogenase [ubiquinone] 1 beta subcomplex subunit 9 (NDUFB9) from Bos taurus (Bovine).